Reading from the N-terminus, the 300-residue chain is MTDSNPTRCGYVAIVGRPNVGKSTLLNHILGQKLAITSRKPQTTRHNMLGIKTEGDVQAIYVDTPGMHKANDKALNRYMNRNASAALKDVDVVIFVVDRTKWTDEDQLVLERVQYVTGPLIIAVNKTDRMEEKAELIPHLQWLQEQLPNAEVMPISAQQGHNLEALEAQIAKHLPENDHFFPEDQITDRSSRFLAAELVREKIMRQLGAELPYQITVEIEEFKQQGHVLHIHALILVERDGQKKIIIGDKGERIKRIGSEARKDMEVLFDSKVMLNLWVKVKGGWSDDERALRSLGYGDL.

In terms of domain architecture, Era-type G spans 8-176 (RCGYVAIVGR…EAQIAKHLPE (169 aa)). The tract at residues 16–23 (GRPNVGKS) is G1. 16 to 23 (GRPNVGKS) lines the GTP pocket. The segment at 42–46 (QTTRH) is G2. The tract at residues 63–66 (DTPG) is G3. GTP-binding positions include 63–67 (DTPGM) and 125–128 (NKTD). The interval 125-128 (NKTD) is G4. Residues 155 to 157 (ISA) are G5. A KH type-2 domain is found at 199–283 (VREKIMRQLG…MLNLWVKVKG (85 aa)).

This sequence belongs to the TRAFAC class TrmE-Era-EngA-EngB-Septin-like GTPase superfamily. Era GTPase family. Monomer.

It is found in the cytoplasm. It localises to the cell inner membrane. In terms of biological role, an essential GTPase that binds both GDP and GTP, with rapid nucleotide exchange. Plays a role in 16S rRNA processing and 30S ribosomal subunit biogenesis and possibly also in cell cycle regulation and energy metabolism. This Pseudomonas putida (strain ATCC 700007 / DSM 6899 / JCM 31910 / BCRC 17059 / LMG 24140 / F1) protein is GTPase Era.